A 195-amino-acid chain; its full sequence is Thymidylate kinase (195 aa).

Gly7–Ser14 serves as a coordination point for ATP.

Belongs to the thymidylate kinase family.

It carries out the reaction dTMP + ATP = dTDP + ADP. In terms of biological role, phosphorylation of dTMP to form dTDP in both de novo and salvage pathways of dTTP synthesis. This Helicobacter hepaticus (strain ATCC 51449 / 3B1) protein is Thymidylate kinase.